We begin with the raw amino-acid sequence, 453 residues long: Phenolic glucoside malonyltransferase 1 (453 aa).

His-165 (proton acceptor) is an active-site residue. The HXXXD motif signature appears at 165-169 (HVAGD). Malonyl-CoA contacts are provided by residues Lys-254, His-266, and 268–269 (TS). Asp-394 (proton acceptor) is an active-site residue. Residues 394–398 (DFGWG) carry the DFGWG motif motif.

Belongs to the plant acyltransferase family. Phenolic glucoside malonyltransferase subfamily. In terms of assembly, monomer. As to expression, highly expressed in flower. Also expressed in flower bud, stem, root and leaf.

The catalysed reaction is a flavonol 3-O-beta-D-glucoside + malonyl-CoA = a flavonol 3-O-(6-O-malonyl-beta-D-glucoside) + CoA. The enzyme catalyses a flavonol 7-O-beta-D-glucoside + malonyl-CoA = a flavonol 7-O-(6-O-malonyl-beta-D-glucoside) + CoA. Functionally, malonyltransferase with broad substrate specificity acting on phenolic glucosides including xenobiotic naphthols. Has activity against flavonoid 7-O-glucosides, flavonoid 3-O-glucosides and naphthol glucosides, and to a lesser extent against coumarin glucosides in vitro. Prefers malonyl-CoA as an acyl donor, but also active with succinyl-CoA and methylmalonyl-CoA, but not with acetyl-CoA. In Nicotiana tabacum (Common tobacco), this protein is Phenolic glucoside malonyltransferase 1.